The following is a 362-amino-acid chain: MRRPSLLLKDILKCTLLVFGVWILYILKLNYTTEECDMKKMHYVDPDRVKRAQTYAQQVLQKECRPKFAKTSMALLFEHRYSVDLLPFVQKAPKDSEAESKYDPPFGFRKFSSKVQTLLELLPEHDLPEHLKAKTCRRCVVIGSGGILHGLELGHTLNQFDVVIRLNSAPVEGYSEHVGNKTTIRMTYPEGAPLSDLEYYSNDLFVAVLFKSVDFNWLQAMVKNETLPFWVRLFFWKQVAEKIPLQPKHFRILNPVIIKETAFDILQYSEPQSRFWGRDKNVPTIGVIAVVLATHLCDEVSLAGFGYDLSQPRTPLHYFDNQCMAAMNFQTMHNVTTETKFLLKLVKEGVVKDLSGGIDREF.

Over 1-5 (MRRPS) the chain is Cytoplasmic. A helical; Signal-anchor for type II membrane protein transmembrane segment spans residues 6–26 (LLLKDILKCTLLVFGVWILYI). Residues 27–362 (LKLNYTTEEC…DLSGGIDREF (336 aa)) lie on the Lumenal side of the membrane. N-linked (GlcNAc...) asparagine glycans are attached at residues Asn30, Asn180, Asn224, and Asn334. Cysteines 139 and 297 form a disulfide.

Belongs to the glycosyltransferase 29 family.

It localises to the golgi apparatus membrane. It catalyses the reaction a beta-D-Gal-(1-&gt;4)-beta-D-Glc-(1&lt;-&gt;1)-Cer(d18:1(4E)) + CMP-N-acetyl-beta-neuraminate = a ganglioside GM3 (d18:1(4E)) + CMP + H(+). The catalysed reaction is ganglioside GA2 (d18:1(4E)/18:0) + CMP-N-acetyl-beta-neuraminate = ganglioside GM2 (d18:1(4E)/18:0) + CMP + H(+). The enzyme catalyses a beta-D-Gal-(1&lt;-&gt;1')-ceramide + CMP-N-acetyl-beta-neuraminate = N-acetyl-alpha-neuraminosyl-(2-&gt;3)-beta-D-galactosyl-(1&lt;-&gt;1')-ceramide + CMP + H(+). It carries out the reaction ganglioside GA1 (d18:1(4E)/18:0) + CMP-N-acetyl-beta-neuraminate = ganglioside GM1 (d18:1(4E)/18:0) + CMP + H(+). Its function is as follows. Transfers the sialyl group (N-acetyl-alpha-neuraminyl or NeuAc) from CMP-NeuAc to the non-reducing terminal galactose (Gal) of glycosphingolipids forming gangliosides (important molecules involved in the regulation of multiple cellular processes, including cell proliferation and differentiation, apoptosis, embryogenesis, development, and oncogenesis). Mainly involved in the biosynthesis of ganglioside GM3 but can also use different glycolipids as substrate acceptors such as D-galactosylceramide (GalCer), asialo-GM2 (GA2) and asialo-GM1 (GA1), although less preferentially than beta-D-Gal-(1-&gt;4)-beta-D-Glc-(1&lt;-&gt;1)-Cer (LacCer). The sequence is that of Lactosylceramide alpha-2,3-sialyltransferase (ST3GAL5) from Pan troglodytes (Chimpanzee).